The primary structure comprises 687 residues: MALLLVSLLAFLSLGSGCHHQVCHYSNRVFLCQESKVTEIPSDLPRNALELRFVLTKLRVIPKGAFSGFGDLKKIEISQNDVLEVIEANVFSNLPKLHEIRIEKANNLLYIDHDAFQNLPNLQYLLISNTGIKHLPAVHKIQSLQKVLLDIQDNINIHIVERNSFMGLSFESMILRLSKNGIQEIHNCAFNGTQLDELNLSDNNNLEELPNDVFQGASGPVILDISGTRIHSLPNYGLENLKKLRARSTYNLKKLPSLEKFVALMEASLTYPSHCCAFANWRQQTSELQTTCNKSILRQEVDMTQARGERVSLAEDDESMMYSEFDYDLCNEVVDVTCSPKPDAFNPCEDIMGYDILRVLIWFISILAITGNIIVLVILITSQYKLTVPRFLMCNLAFADLCIGIYLLLIASVDIHTKSQYHNYAIDWQTGAGCDAAGFFTVFGSELSVYTLTAITLERWHTITHAMQLECKVQLRHAASVMLVGWIFGFGVGLLPIFGISTYMKVSICLPMDIDSPLSQLYVMSLLVLNVLAFVVICGCYTHIYLTVRNPNIVSSSSDTKIAKRMGILIFTDFLCMAPISFFGISASLKVALITVSKSKILLVLFYPINSCANPFLYAIFTKNFRRDFFILLSKFGCYEMQAQTYRTETSSTGHISHPKNGPCPPTPRVTNGANCTLVPLSHLAQN.

The N-terminal stretch at Met-1–Gly-17 is a signal peptide. Residues Cys-18–Arg-46 form the LRRNT domain. The Extracellular segment spans residues Cys-18–Arg-358. Cys-23 and Cys-32 form a disulfide bridge. LRR repeat units lie at residues Leu-49 to Leu-72, Lys-73 to Leu-97, His-98 to Asn-118, Leu-119 to Ser-143, Leu-144 to Ser-169, Phe-170 to Gly-192, Thr-193 to Gly-216, Ala-217 to Asn-240, and Leu-241 to Glu-259. N-linked (GlcNAc...) asparagine glycosylation is found at Asn-191 and Asn-199. Disulfide bonds link Cys-275/Cys-338, Cys-276/Cys-292, Cys-276/Cys-348, and Cys-292/Cys-330. Asn-293 carries an N-linked (GlcNAc...) asparagine glycan. A Sulfotyrosine modification is found at Tyr-327. Residues Val-359–Leu-379 traverse the membrane as a helical segment. Over Ile-380–Arg-390 the chain is Cytoplasmic. Residues Phe-391–Val-413 form a helical membrane-spanning segment. Topologically, residues Asp-414–Asp-435 are extracellular. An intrachain disulfide couples Cys-434 to Cys-509. A helical membrane pass occupies residues Ala-436 to Leu-457. Over Glu-458–His-477 the chain is Cytoplasmic. The chain crosses the membrane as a helical span at residues Ala-478–Ile-500. The Extracellular portion of the chain corresponds to Ser-501–Gln-520. The chain crosses the membrane as a helical span at residues Leu-521–Thr-542. At His-543–Arg-565 the chain is on the cytoplasmic side. Residues Met-566–Leu-589 form a helical membrane-spanning segment. Residues Lys-590–Lys-600 lie on the Extracellular side of the membrane. A helical transmembrane segment spans residues Ile-601–Thr-622. At Lys-623 to Asn-687 the chain is on the cytoplasmic side.

It belongs to the G-protein coupled receptor 1 family. FSH/LSH/TSH subfamily. Homotrimer. Functions as a homotrimer binding the FSH hormone heterodimer composed of CGA and FSHB. Interacts with ARRB2. Interacts with APPL2; interaction is independent of follicle stimulating hormone stimulation. In terms of processing, N-glycosylated; indirectly required for FSH-binding, possibly via a conformational change that allows high affinity binding of hormone. Sulfated.

It localises to the cell membrane. In terms of biological role, g protein-coupled receptor for follitropin, the follicle-stimulating hormone. Through cAMP production activates the downstream PI3K-AKT and ERK1/ERK2 signaling pathways. This chain is Follicle-stimulating hormone receptor (FSHR), found in Equus asinus (Donkey).